The sequence spans 192 residues: MSAAGASERERLVALLRERSFEQKRVVLASGRESDFFIDCKQSVLTAEGHALVGSLMFEALGALPRCEAVAGVELGGCPLASAVSLTSFLRGRPLPALYVRKEVKDHGSRRLVEGDRGLVPGMPVAILEDVITTGGSTLKAVEKLRTAGASVVGVIALVDRLEGGAEAIRAAGLPVVAICTRRDFIPDNPPG.

Residues Arg-101, Lys-102, Lys-105, His-107, and 129 to 137 (EDVITTGGS) contribute to the 5-phospho-alpha-D-ribose 1-diphosphate site. 2 residues coordinate orotate: Thr-133 and Arg-161.

Belongs to the purine/pyrimidine phosphoribosyltransferase family. PyrE subfamily. In terms of assembly, homodimer. Mg(2+) serves as cofactor.

It catalyses the reaction orotidine 5'-phosphate + diphosphate = orotate + 5-phospho-alpha-D-ribose 1-diphosphate. It functions in the pathway pyrimidine metabolism; UMP biosynthesis via de novo pathway; UMP from orotate: step 1/2. Catalyzes the transfer of a ribosyl phosphate group from 5-phosphoribose 1-diphosphate to orotate, leading to the formation of orotidine monophosphate (OMP). In Sorangium cellulosum (strain So ce56) (Polyangium cellulosum (strain So ce56)), this protein is Orotate phosphoribosyltransferase.